A 425-amino-acid chain; its full sequence is MKKSVDFIGVGTGPFNLSIAALSHQIEELDCLFFDEHPHFSWHPGMLVPDCHMQTVFLKDLVSAVAPTNPYSFVNYLVKHKKFYRFLTSRLRTVSREEFSDYLRWAAEDMNNLYFSHTVENIDFDKKRRLFLVQTSQGEYFARNICLGTGKQPYLPPCVKHMTQSCFHASEMNLRRPDLSGKRITVVGGGQSGADLFLNALRGEWGEAAEINWVSRRNNFNALDEAAFADEYFTPEYISGFSGLEEDIRHQLLDEQKMTSDGITADSLLTIYRELYHRFEVLRKPRNIRLLPSRSVTTLESSGPGWKLLMEHHLDQGRESLESDVVIFATGYRSALPQILPSLMPLITMHDKNTFKVRDDFTLEWSGPKENNIFVVNASMQTHGIAEPQLSLMAWRSARILNRVMGRDLFDLSMPPALIQWRSGT.

8–14 (IGVGTGP) contributes to the FAD binding site.

It belongs to the lysine N(6)-hydroxylase/L-ornithine N(5)-oxygenase family. It depends on FAD as a cofactor.

The protein resides in the cytoplasm. The protein localises to the cell membrane. It catalyses the reaction L-lysine + NADPH + O2 = N(6)-hydroxy-L-lysine + NADP(+) + H2O. It functions in the pathway siderophore biosynthesis; aerobactin biosynthesis. Flavoprotein monooxygenase required for N-hydroxylation of lysine. Involved in the biosynthesis of the siderophore aerobactin which is a chelator that mediates the high-affinity iron transport systems induced by the organism under iron-stressed conditions. The sequence is that of L-lysine N6-monooxygenase from Escherichia coli.